Reading from the N-terminus, the 349-residue chain is MTEFDNLTWLHGKPQGSGLLKANPEDFVVVEDLGFTPDGEGEHILLRILKNGCNTRFVADALAKFLKIHAREVSFAGQKDKHAVTEQWLCARVPGKEMPDFSAFQLEGCKVLEYARHKRKLRLGALKGNAFTLVLREISDRRDVETRLQAIRDGGVPNYFGAQRFGIGGSNLQGALRWAQSNAPVRDRNKRSFWLSAARSALFNQIVHQRLKKPDFNQVVDGDALQLAGRGSWFVATSEELPELQRRVDEKELMITASLPGSGEWGTQRAALAFEQDAIAQETVLQSLLLREKVEASRRAMLLYPQQLSWNWWDDVTVELRFWLPAGSFATSVVRELINTMGDYAHIAE.

F27 lines the substrate pocket. The active-site Nucleophile is D80. Residue N129 coordinates substrate. The 149-residue stretch at 155 to 303 folds into the TRUD domain; the sequence is GVPNYFGAQR…VEASRRAMLL (149 aa). F329 provides a ligand contact to substrate.

It belongs to the pseudouridine synthase TruD family.

It catalyses the reaction uridine(13) in tRNA = pseudouridine(13) in tRNA. In terms of biological role, responsible for synthesis of pseudouridine from uracil-13 in transfer RNAs. This is tRNA pseudouridine synthase D from Salmonella dublin (strain CT_02021853).